We begin with the raw amino-acid sequence, 203 residues long: Peptide deformylase (203 aa).

Fe cation-binding residues include C121 and H163. The active site involves E164. Fe cation is bound at residue H167.

It belongs to the polypeptide deformylase family. Fe(2+) is required as a cofactor.

It catalyses the reaction N-terminal N-formyl-L-methionyl-[peptide] + H2O = N-terminal L-methionyl-[peptide] + formate. In terms of biological role, removes the formyl group from the N-terminal Met of newly synthesized proteins. Requires at least a dipeptide for an efficient rate of reaction. N-terminal L-methionine is a prerequisite for activity but the enzyme has broad specificity at other positions. This chain is Peptide deformylase, found in Prochlorococcus marinus (strain MIT 9515).